We begin with the raw amino-acid sequence, 425 residues long: Serine--tRNA ligase (425 aa).

233-235 (TAE) lines the L-serine pocket. 264-266 (RRE) contributes to the ATP binding site. Glutamate 287 is an L-serine binding site. 351–354 (EISS) serves as a coordination point for ATP. Serine 387 lines the L-serine pocket.

The protein belongs to the class-II aminoacyl-tRNA synthetase family. Type-1 seryl-tRNA synthetase subfamily. As to quaternary structure, homodimer. The tRNA molecule binds across the dimer.

Its subcellular location is the cytoplasm. It carries out the reaction tRNA(Ser) + L-serine + ATP = L-seryl-tRNA(Ser) + AMP + diphosphate + H(+). It catalyses the reaction tRNA(Sec) + L-serine + ATP = L-seryl-tRNA(Sec) + AMP + diphosphate + H(+). It functions in the pathway aminoacyl-tRNA biosynthesis; selenocysteinyl-tRNA(Sec) biosynthesis; L-seryl-tRNA(Sec) from L-serine and tRNA(Sec): step 1/1. Catalyzes the attachment of serine to tRNA(Ser). Is also able to aminoacylate tRNA(Sec) with serine, to form the misacylated tRNA L-seryl-tRNA(Sec), which will be further converted into selenocysteinyl-tRNA(Sec). In Thermotoga neapolitana (strain ATCC 49049 / DSM 4359 / NBRC 107923 / NS-E), this protein is Serine--tRNA ligase.